Here is a 169-residue protein sequence, read N- to C-terminus: Cell division inhibitor SulA (169 aa).

The interval 106 to 112 (ALRTGNY) is ftsZ binding. The tract at residues 162–169 (KIHSNLYH) is lon protease binding.

It belongs to the SulA family. Interacts with FtsZ. Post-translationally, is rapidly cleaved and degraded by the Lon protease once DNA damage is repaired.

Its function is as follows. Component of the SOS system and an inhibitor of cell division. Accumulation of SulA causes rapid cessation of cell division and the appearance of long, non-septate filaments. In the presence of GTP, binds a polymerization-competent form of FtsZ in a 1:1 ratio, thus inhibiting FtsZ polymerization and therefore preventing it from participating in the assembly of the Z ring. This mechanism prevents the premature segregation of damaged DNA to daughter cells during cell division. The chain is Cell division inhibitor SulA from Salmonella dublin (strain CT_02021853).